We begin with the raw amino-acid sequence, 859 residues long: MKEFPKNYNFTENEKKWQQIWQEKQIYAYDPNISKDEIYVVDTPPPTVSGQLHIGHVYSYTQTDFIVRFQRMMGKNIFYPMGFDDNGLPTERLVEKQKQIKAYNMSRSEFIKICEEVVASEEEKFRSLFNQIALSVDWSLEYQTISPLSRKISQMSFLDLVKKGEVYRNDQPILWDPVDGTALAQADIDDKEKTSFMNYITFEIEEDDRPFSKFAYREEFVGNTEHSTAAYIKVREDASTGLTHKLPLEVEFGKRSITIATTRPELLPACVAVFYHPDDKRYKHLAGKSAITPLFNGKVPLLADPLVQQDKGTGLVMCCTFGDQTDITWWKTHNLPLKTIVTKKGTIDFPHDIAIDGLKIKEARTKIIDILKEQNLLTKQEEITHTVKCAERSGAPLEILTVPQWFVKTISHKEALLKRASELNWHPKNMKIRLESWINSISWDWCISRQRYFGVPFPVWYSKRVGEEGKILYADISQLPVDPLKDLPIGYSKEEVEPDLDVMDTWATSSVSPQLSTHGISDDFTVNKERHDKLFPMELRPQAHEIIRTWAFYTILKAHLHQNTLPWKNIMVSGWCLAEDRSKMSKSKGNVLVPEKLLEQYGSDVIRYWSANSKLGADTAYSEDVMKNGKRLVNKLWNAAKFVSIHFEKLKDKDKQAKLLDVKEKITNEFDQWMINKLVELVKLATNELQNYEYANAMHLTEKFFWAIFCDNYLEISKNRAYDEENKNPSGQYSSILTLYHTMQILLKLFAPFMPHITEELYQILYSDKSVHEKGNWVNYGDLNYKIDAKGAEGLLEILDIVRKFKAEKNLSIKAPIKLLEVSGIELSAELTEDLKNVTSAEEIQFEDQGDKIKVNVIL.

The 'HIGH' region motif lies at P46–H56. The short motif at K583–S587 is the 'KMSKS' region element. ATP is bound at residue K586.

The protein belongs to the class-I aminoacyl-tRNA synthetase family. ValS type 2 subfamily. As to quaternary structure, monomer.

The protein localises to the cytoplasm. The enzyme catalyses tRNA(Val) + L-valine + ATP = L-valyl-tRNA(Val) + AMP + diphosphate. In terms of biological role, catalyzes the attachment of valine to tRNA(Val). As ValRS can inadvertently accommodate and process structurally similar amino acids such as threonine, to avoid such errors, it has a 'posttransfer' editing activity that hydrolyzes mischarged Thr-tRNA(Val) in a tRNA-dependent manner. This is Valine--tRNA ligase from Rickettsia felis (strain ATCC VR-1525 / URRWXCal2) (Rickettsia azadi).